Reading from the N-terminus, the 474-residue chain is ERO1-like protein alpha (474 aa).

The N-terminal stretch at Met1–Ser29 is a signal peptide. Cystine bridges form between Cys40–Cys53, Cys42–Cys51, Cys90–Cys398, Cys99–Cys104, Cys99–Cys138, Cys104–Cys109, Cys215–Cys248, and Cys401–Cys404. Residues Arg194, Thr196, and Trp207 each coordinate FAD. Positions 259, 262, 294, and 307 each coordinate FAD. N-linked (GlcNAc...) asparagine glycosylation is found at Asn340 and Asn391. N-linked (GlcNAc...) asparagine glycosylation occurs at Asn430.

This sequence belongs to the EROs family. As to quaternary structure, predominantly monomer. May function both as a monomer and a homodimer. The cofactor is FAD. In terms of processing, the Cys-99/Cys-104 and Cys-401/Cys-404 disulfide bonds constitute the redox-active center. The Cys-99/Cys-104 disulfide bond may accept electron from protein disulfide isomerase (PDI) and funnel them to the active site disulfide Cys-401/Cys-404.

It localises to the endoplasmic reticulum membrane. With respect to regulation, enzyme activity is tightly regulated to prevent the accumulation of reactive oxygen species in the endoplasmic reticulum. Reversibly down-regulated by the formation of disulfide bonds between the active site Cys-99 and Cys-138, and between Cys-104 and Cys-109. Glutathione may be required to regulate its activity in the endoplasmic reticulum. Functionally, oxidoreductase involved in disulfide bond formation in the endoplasmic reticulum. Efficiently reoxidizes P4HB/PDI, the enzyme catalyzing protein disulfide formation, in order to allow P4HB to sustain additional rounds of disulfide formation. Following P4HB reoxidation, passes its electrons to molecular oxygen via FAD, leading to the production of reactive oxygen species (ROS) in the cell. Required for the folding of immunoglobulins. The protein is ERO1-like protein alpha of Xenopus tropicalis (Western clawed frog).